We begin with the raw amino-acid sequence, 122 residues long: Large ribosomal subunit protein uL14 (122 aa).

The protein belongs to the universal ribosomal protein uL14 family. Part of the 50S ribosomal subunit. Forms a cluster with proteins L3 and L19. In the 70S ribosome, L14 and L19 interact and together make contacts with the 16S rRNA in bridges B5 and B8.

In terms of biological role, binds to 23S rRNA. Forms part of two intersubunit bridges in the 70S ribosome. In Bacillus pumilus (strain SAFR-032), this protein is Large ribosomal subunit protein uL14.